We begin with the raw amino-acid sequence, 206 residues long: LysM and putative peptidoglycan-binding domain-containing protein 2 (206 aa).

In terms of domain architecture, LysM spans 59–103 (IEHCLSPSDTLQGIALKYGVTMEQIKRANKLFSTDCIFLRKSLNI). The segment at 184 to 206 (AQRLKEEDDLRHDGSYATCSYQH) is disordered. The segment covering 186-197 (RLKEEDDLRHDG) has biased composition (basic and acidic residues).

This is LysM and putative peptidoglycan-binding domain-containing protein 2 (lysmd2) from Xenopus laevis (African clawed frog).